The primary structure comprises 447 residues: 3-phosphoshikimate 1-carboxyvinyltransferase (447 aa).

Residues 1-22 form a disordered region; that stretch reads MTPSLKRLSGAMRARPAPALSG. Residues Lys-30, Ser-31, and Arg-35 each contribute to the 3-phosphoshikimate site. A phosphoenolpyruvate-binding site is contributed by Lys-30. 2 residues coordinate phosphoenolpyruvate: Gly-102 and Arg-130. 4 residues coordinate 3-phosphoshikimate: Ser-173, Gln-175, Asp-325, and Lys-352. Gln-175 lines the phosphoenolpyruvate pocket. The active-site Proton acceptor is the Asp-325. Arg-356 and Arg-401 together coordinate phosphoenolpyruvate.

The protein belongs to the EPSP synthase family. As to quaternary structure, monomer.

The protein resides in the cytoplasm. The catalysed reaction is 3-phosphoshikimate + phosphoenolpyruvate = 5-O-(1-carboxyvinyl)-3-phosphoshikimate + phosphate. Its pathway is metabolic intermediate biosynthesis; chorismate biosynthesis; chorismate from D-erythrose 4-phosphate and phosphoenolpyruvate: step 6/7. Its function is as follows. Catalyzes the transfer of the enolpyruvyl moiety of phosphoenolpyruvate (PEP) to the 5-hydroxyl of shikimate-3-phosphate (S3P) to produce enolpyruvyl shikimate-3-phosphate and inorganic phosphate. This Maricaulis maris (strain MCS10) (Caulobacter maris) protein is 3-phosphoshikimate 1-carboxyvinyltransferase.